Reading from the N-terminus, the 361-residue chain is Alanine racemase 2 (361 aa).

The Proton acceptor; specific for D-alanine role is filled by lysine 30. Lysine 30 is subject to N6-(pyridoxal phosphate)lysine. Residue arginine 122 coordinates substrate. Residue tyrosine 256 is the Proton acceptor; specific for L-alanine of the active site. Methionine 303 is a substrate binding site.

Belongs to the alanine racemase family. Requires pyridoxal 5'-phosphate as cofactor.

It carries out the reaction L-alanine = D-alanine. It participates in amino-acid biosynthesis; D-alanine biosynthesis; D-alanine from L-alanine: step 1/1. In terms of biological role, catalyzes the interconversion of L-alanine and D-alanine. May also act on other amino acids. The sequence is that of Alanine racemase 2 (alr2) from Staphylococcus aureus (strain COL).